Here is a 313-residue protein sequence, read N- to C-terminus: Pantothenate synthetase (313 aa).

Residue 43 to 50 (MGALHEGH) participates in ATP binding. His50 functions as the Proton donor in the catalytic mechanism. (R)-pantoate is bound at residue Gln75. A beta-alanine-binding site is contributed by Gln75. An ATP-binding site is contributed by 161–164 (GEKD). Gln167 contacts (R)-pantoate. Residues Val190 and 198 to 201 (LSSR) contribute to the ATP site.

The protein belongs to the pantothenate synthetase family. In terms of assembly, homodimer.

The protein resides in the cytoplasm. It catalyses the reaction (R)-pantoate + beta-alanine + ATP = (R)-pantothenate + AMP + diphosphate + H(+). It functions in the pathway cofactor biosynthesis; (R)-pantothenate biosynthesis; (R)-pantothenate from (R)-pantoate and beta-alanine: step 1/1. Functionally, catalyzes the condensation of pantoate with beta-alanine in an ATP-dependent reaction via a pantoyl-adenylate intermediate. This is Pantothenate synthetase from Mycobacterium sp. (strain JLS).